The chain runs to 269 residues: Trans-aconitate 2-methyltransferase (269 aa).

The protein belongs to the methyltransferase superfamily. Tam family.

It localises to the cytoplasm. The catalysed reaction is trans-aconitate + S-adenosyl-L-methionine = (E)-3-(methoxycarbonyl)pent-2-enedioate + S-adenosyl-L-homocysteine. Catalyzes the S-adenosylmethionine monomethyl esterification of trans-aconitate. This is Trans-aconitate 2-methyltransferase from Streptomyces avermitilis (strain ATCC 31267 / DSM 46492 / JCM 5070 / NBRC 14893 / NCIMB 12804 / NRRL 8165 / MA-4680).